A 422-amino-acid chain; its full sequence is Histidine--tRNA ligase (422 aa).

It belongs to the class-II aminoacyl-tRNA synthetase family. In terms of assembly, homodimer.

It is found in the cytoplasm. It carries out the reaction tRNA(His) + L-histidine + ATP = L-histidyl-tRNA(His) + AMP + diphosphate + H(+). In Vibrio parahaemolyticus serotype O3:K6 (strain RIMD 2210633), this protein is Histidine--tRNA ligase.